We begin with the raw amino-acid sequence, 107 residues long: Flagellar transcriptional regulator FlhD (107 aa).

It belongs to the FlhD family. Homodimer; disulfide-linked. Forms a heterohexamer composed of two FlhC and four FlhD subunits. Each FlhC binds a FlhD dimer, forming a heterotrimer, and a hexamer assembles by dimerization of two heterotrimers.

It is found in the cytoplasm. Functionally, functions in complex with FlhC as a master transcriptional regulator that regulates transcription of several flagellar and non-flagellar operons by binding to their promoter region. Activates expression of class 2 flagellar genes, including fliA, which is a flagellum-specific sigma factor that turns on the class 3 genes. Also regulates genes whose products function in a variety of physiological pathways. This Bordetella pertussis (strain Tohama I / ATCC BAA-589 / NCTC 13251) protein is Flagellar transcriptional regulator FlhD.